Consider the following 73-residue polypeptide: Aldehyde dehydrogenase (73 aa).

It belongs to the aldehyde dehydrogenase family.

The catalysed reaction is an aldehyde + NAD(+) + H2O = a carboxylate + NADH + 2 H(+). It participates in alcohol metabolism; ethanol degradation; acetate from ethanol: step 2/2. The polypeptide is Aldehyde dehydrogenase (Geobacillus stearothermophilus (Bacillus stearothermophilus)).